A 412-amino-acid chain; its full sequence is DNA replication and repair protein RecF (412 aa).

30–37 (GKNGLGKT) is a binding site for ATP.

It belongs to the RecF family.

It localises to the cytoplasm. Functionally, the RecF protein is involved in DNA metabolism; it is required for DNA replication and normal SOS inducibility. RecF binds preferentially to single-stranded, linear DNA. It also seems to bind ATP. The polypeptide is DNA replication and repair protein RecF (Bifidobacterium longum subsp. infantis (strain ATCC 15697 / DSM 20088 / JCM 1222 / NCTC 11817 / S12)).